We begin with the raw amino-acid sequence, 568 residues long: Putative ABC transporter ATP-binding protein CPE1583 (568 aa).

ABC transporter domains lie at 7 to 248 and 303 to 536; these read IEFK…GIRE and LEFK…ASLK. Residues 41 to 48 and 336 to 343 contribute to the ATP site; these read GPSGSGKS and GKNGAGKS.

The protein belongs to the ABC transporter superfamily.

Its subcellular location is the cell membrane. In terms of biological role, probably part of an ABC transporter complex. Responsible for energy coupling to the transport system. The chain is Putative ABC transporter ATP-binding protein CPE1583 from Clostridium perfringens (strain 13 / Type A).